The sequence spans 300 residues: N-acetylmuramic acid 6-phosphate etherase 1 (300 aa).

An SIS domain is found at 57–220 (IATAFAQGGR…TTGAMIKSGK (164 aa)). The active-site Proton donor is the E85. E116 is an active-site residue.

The protein belongs to the GCKR-like family. MurNAc-6-P etherase subfamily. As to quaternary structure, homodimer.

The enzyme catalyses N-acetyl-D-muramate 6-phosphate + H2O = N-acetyl-D-glucosamine 6-phosphate + (R)-lactate. It participates in amino-sugar metabolism; 1,6-anhydro-N-acetylmuramate degradation. It functions in the pathway amino-sugar metabolism; N-acetylmuramate degradation. Its pathway is cell wall biogenesis; peptidoglycan recycling. Its function is as follows. Specifically catalyzes the cleavage of the D-lactyl ether substituent of MurNAc 6-phosphate, producing GlcNAc 6-phosphate and D-lactate. Together with AnmK, is also required for the utilization of anhydro-N-acetylmuramic acid (anhMurNAc) either imported from the medium or derived from its own cell wall murein, and thus plays a role in cell wall recycling. This is N-acetylmuramic acid 6-phosphate etherase 1 from Vibrio cholerae serotype O1 (strain ATCC 39315 / El Tor Inaba N16961).